Consider the following 269-residue polypeptide: ATP synthase subunit delta (269 aa).

The protein belongs to the ATPase delta chain family. F-type ATPases have 2 components, F(1) - the catalytic core - and F(0) - the membrane proton channel. F(1) has five subunits: alpha(3), beta(3), gamma(1), delta(1), epsilon(1). F(0) has three main subunits: a(1), b(2) and c(10-14). The alpha and beta chains form an alternating ring which encloses part of the gamma chain. F(1) is attached to F(0) by a central stalk formed by the gamma and epsilon chains, while a peripheral stalk is formed by the delta and b chains.

Its subcellular location is the cell membrane. Functionally, f(1)F(0) ATP synthase produces ATP from ADP in the presence of a proton or sodium gradient. F-type ATPases consist of two structural domains, F(1) containing the extramembraneous catalytic core and F(0) containing the membrane proton channel, linked together by a central stalk and a peripheral stalk. During catalysis, ATP synthesis in the catalytic domain of F(1) is coupled via a rotary mechanism of the central stalk subunits to proton translocation. This protein is part of the stalk that links CF(0) to CF(1). It either transmits conformational changes from CF(0) to CF(1) or is implicated in proton conduction. The chain is ATP synthase subunit delta from Nocardia farcinica (strain IFM 10152).